The chain runs to 835 residues: Ribonucleoside-diphosphate reductase large subunit (835 aa).

Residues 1-39 are disordered; sequence MPPRAPRPAGAVSPPFPPLAGPPLKARAPRARDSPLTSP. Residues T262, 277–278, G308, 489–493, and 666–670 each bind substrate; these read SC, NLCTE, and PTVSS. An intrachain disulfide couples C278 to C506. N489 (proton acceptor) is an active-site residue. C491 functions as the Cysteine radical intermediate in the catalytic mechanism. Residue E493 is the Proton acceptor of the active site.

The protein belongs to the ribonucleoside diphosphate reductase large chain family. In terms of assembly, heterotetramer composed of a homodimer of the large subunit (R1) and a homodimer of the small subunit (R2). Larger multisubunit protein complex are also active, composed of (R1)n(R2)n.

It catalyses the reaction a 2'-deoxyribonucleoside 5'-diphosphate + [thioredoxin]-disulfide + H2O = a ribonucleoside 5'-diphosphate + [thioredoxin]-dithiol. Functionally, ribonucleoside-diphosphate reductase holoenzyme provides the precursors necessary for viral DNA synthesis. Allows virus growth in non-dividing cells, as well as reactivation from latency in infected hosts. Catalyzes the biosynthesis of deoxyribonucleotides from the corresponding ribonucleotides. This Suid herpesvirus 1 (strain Kaplan) (SuHV-1) protein is Ribonucleoside-diphosphate reductase large subunit.